A 471-amino-acid polypeptide reads, in one-letter code: Pneumolysin (471 aa).

Beta stranded transmembrane passes span 158–171 (MEQL…DFEK), 178–187 (IDFNSVHSGE), 256–265 (SDEVEAAFEA), and 273–285 (APQT…LDNT). The short motif at 427-437 (ECTGLAWEWWR) is the Conserved undecapeptide element. The short motif at 459 to 460 (TL) is the Cholesterol binding element.

It belongs to the cholesterol-dependent cytolysin family. Elongated monomers align along their lengths, indicating intersubunit contacts and suggesting the prepore structure. Modeling based on cryo-EM shows a homooligomeric pore complex containing 38-44 subunits; when inserted in the host membrane. The size of isolated pores is detergent-dependent; in amphipol A8-35 homogenous rings form with 42 subunits.

The protein resides in the secreted. It localises to the host cell membrane. Its activity is regulated as follows. Erythrocytes hemolysis is inhibited by cholesterol. Functionally, a cholesterol-dependent toxin that causes cytolysis by forming pores in cholesterol-containing host membranes. After binding to target membranes, the protein undergoes a major conformation change, leading to its insertion in the host membrane and formation of an oligomeric pore complex. Cholesterol is required for binding to host membranes, membrane insertion and pore formation; cholesterol binding is mediated by a Thr-Leu pair in the C-terminus. Can be reversibly inactivated by oxidation. This is Pneumolysin (ply) from Streptococcus pneumoniae serotype 2 (strain D39 / NCTC 7466).